Consider the following 1125-residue polypeptide: Telomerase reverse transcriptase (1125 aa).

The tract at residues 1-239 is RNA-interacting domain 1; it reads MPRAPRCPAV…TKRLLSLTST (239 aa). The segment at 58-205 is GQ motif; it reads VPWGSQPPPA…RPVGGNFTNL (148 aa). The required for regulating specificity for telomeric DNA and for processivity for primer elongation stretch occupies residues 137 to 141; it reads WMLLL. Polar residues predominate over residues 206-216; it reads GSAHQIKNSGH. The interval 206–304 is disordered; it reads GSAHQIKNSG…ASDPSLSGSV (99 aa). The segment at 240–328 is linker; sequence NVPSAKKARF…PPQDAEKLRP (89 aa). Residues 247-259 are compositionally biased toward basic and acidic residues; that stretch reads ARFEPALRVDKGP. Positions 273–287 are enriched in low complexity; the sequence is APSPAASPKVPPAAK. Positions 306–528 are required for oligomerization; it reads CKHKPSSSSL…VPAAEHRLRE (223 aa). An RNA-interacting domain 2 region spans residues 329-540; that stretch reads FTETRHFLYS…LAMFLFWLMD (212 aa). A TFLY; involved in RNA binding motif is present at residues 332–337; sequence TRHFLY. The segment at 381-511 is QFP motif; the sequence is FCRTRRLPRR…VKVEDCHWLR (131 aa). The tract at residues 402–422 is CP motif; it reads LMNHAKCQYVRFLRSHCRFRT. Serine 447 bears the Phosphoserine; by DYRK2 mark. The 334-residue stretch at 595 to 928 folds into the Reverse transcriptase domain; it reads EVKHHQDTWL…CLFPWCGLLL (334 aa). Phosphotyrosine; by SRC-type Tyr-kinases is present on tyrosine 697. Mg(2+) contacts are provided by aspartate 702, aspartate 861, and aspartate 862. Residues 907–921 are required for oligomerization; it reads LGGAAPHQLPAHCLF. The interval 923–927 is primer grip sequence; the sequence is WCGLL. The segment at 929–1125 is CTE; the sequence is DTRTLEVFCD…LSTDFQTILD (197 aa).

Belongs to the reverse transcriptase family. Telomerase subfamily. In terms of assembly, catalytic component of the telomerase holoenzyme complex composed of one molecule of TERT, one molecule of WRAP53/TCAB1, two molecules of H/ACA ribonucleoprotein complex subunits DKC1, NOP10, NHP2 and GAR1, and a telomerase RNA template component (TERC). The telomerase holoenzyme complex is associated with TEP1, SMG6/EST1A and POT1. The molecular chaperone HSP90/P23 complex is required for correct assembly and stabilization of the active telomerase. Interacts directly with HSP90A and PTGES3. Interacts with HSPA1A; the interaction occurs in the absence of TERC and dissociates once the complex has formed. Interacts with RAN; the interaction promotes nuclear export of TERT. Interacts with XPO1. Interacts with PTPN11; the interaction retains TERT in the nucleus. Interacts with NCL (via RRM1 and C-terminal RRM4/Arg/Gly-rich domains); the interaction is important for nucleolar localization of TERT. Interacts with SMARCA4 (via the bromodomain); the interaction regulates Wnt-mediated signaling. Interacts with MCRS1 (isoform MCRS2); the interaction inhibits in vitro telomerase activity. Interacts with PIF1; the interaction has no effect on the elongation activity of TERT. Interacts with PML; the interaction recruits TERT to PML bodies and inhibits telomerase activity. Interacts with GNL3L. Interacts with isoform 1 and isoform 2 of NVL. Interacts with DHX36. Interacts with ATF7. Phosphorylation at Tyr-697 under oxidative stress leads to translocation of TERT to the cytoplasm and reduces its antiapoptotic activity. Dephosphorylated by SHP2/PTPN11 leading to nuclear retention. Phosphorylation at the G2/M phase at Ser-447 by DYRK2 promotes ubiquitination by the EDVP complex and degradation. Post-translationally, ubiquitinated by the EDVP complex, a E3 ligase complex following phosphorylation at Ser-447 by DYRK2. Ubiquitinated leads to proteasomal degradation. In terms of tissue distribution, isoform 1 and isoform 2 expressed in thymus, liver, spleen, lung, kidney and testis. High level of inactive isoform 3 in adult hippocampus, low level in heart, cortex and cerebellum.

The protein resides in the nucleus. Its subcellular location is the nucleolus. It is found in the nucleoplasm. It localises to the chromosome. The protein localises to the telomere. The protein resides in the cytoplasm. Its subcellular location is the PML body. The enzyme catalyses DNA(n) + a 2'-deoxyribonucleoside 5'-triphosphate = DNA(n+1) + diphosphate. Telomerase is a ribonucleoprotein enzyme essential for the replication of chromosome termini in most eukaryotes. Active in progenitor and cancer cells. Inactive, or very low activity, in normal somatic cells. Catalytic component of the teleromerase holoenzyme complex whose main activity is the elongation of telomeres by acting as a reverse transcriptase that adds simple sequence repeats to chromosome ends by copying a template sequence within the RNA component of the enzyme. Catalyzes the RNA-dependent extension of 3'-chromosomal termini with the 6-nucleotide telomeric repeat unit, 5'-TTAGGG-3'. The catalytic cycle involves primer binding, primer extension and release of product once the template boundary has been reached or nascent product translocation followed by further extension. More active on substrates containing 2 or 3 telomeric repeats. Telomerase activity is regulated by a number of factors including telomerase complex-associated proteins, chaperones and polypeptide modifiers. Modulates Wnt signaling. Plays important roles in aging and antiapoptosis. The protein is Telomerase reverse transcriptase of Rattus norvegicus (Rat).